A 131-amino-acid polypeptide reads, in one-letter code: Squamosa promoter-binding-like protein 3 (131 aa).

Positions 1–17 are enriched in basic and acidic residues; the sequence is MSMRRSKAEGKRSLREL. The segment at 1–54 is disordered; that stretch reads MSMRRSKAEGKRSLRELSEEEEEEEETEDEDTFEEEEALEKKQKGKATSSSGVC. The span at 18 to 38 shows a compositional bias: acidic residues; it reads SEEEEEEEETEDEDTFEEEEA. Residues 45–129 form a sufficient and necessary for DNA binding region; it reads GKATSSSGVC…GHNERRRKST (85 aa). The SBP-type zinc-finger motif lies at 51–128; it reads SGVCQVESCT…AGHNERRRKS (78 aa). Zn(2+) is bound by residues cysteine 54, cysteine 59, cysteine 76, histidine 79, cysteine 95, cysteine 98, histidine 102, and cysteine 114. The Bipartite nuclear localization signal motif lies at 111-127; the sequence is KRSCRRRLAGHNERRRK.

Zn(2+) is required as a cofactor. Expressed in vegetative and inflorescence apical meristems, floral meristems, leaf and flower organ primordia, inflorescence stem tissue and to lower extent in roots.

The protein resides in the nucleus. The protein localises to the cytoplasm. In terms of biological role, trans-acting factor that binds specifically to the consensus nucleotide sequence 5'-TNCGTACAA-3' of AP1 promoter. Binds specifically to the 5'-GTAC-3' core sequence. Promotes both vegetative phase change and flowering. Regulates phase-specific patterns of leaf epidermal differentiation and flowering time, but does not seem to affect leaf shape. This is Squamosa promoter-binding-like protein 3 (SPL3) from Arabidopsis thaliana (Mouse-ear cress).